Consider the following 611-residue polypeptide: Cilia- and flagella-associated protein 100 (611 aa).

Residues 1–17 (MSEIPSTIVSKNMTNDK) show a composition bias toward polar residues. A disordered region spans residues 1–57 (MSEIPSTIVSKNMTNDKNSLESMNISSSSSTEENPKKQARKNEEHGPDPSANPFHLS). Over residues 20 to 32 (LESMNISSSSSTE) the composition is skewed to low complexity. Basic and acidic residues predominate over residues 33 to 47 (ENPKKQARKNEEHGP). Coiled-coil stretches lie at residues 101-128 (SLRR…RAFR), 164-203 (ALDV…FDEF), and 230-257 (LEIR…KHYK). 2 disordered regions span residues 287–323 (EVSE…GQGT) and 338–380 (SPSY…GEEP). The segment covering 338–357 (SPSYLSSPQQGSQPSESSGG) has biased composition (low complexity). 2 coiled-coil regions span residues 393–432 (VFRE…MDRE) and 526–578 (QVKI…RGRT).

It belongs to the CFAP100 family.

The protein localises to the cytoplasm. It is found in the cytoskeleton. The protein resides in the cilium axoneme. May play a role in ciliary/flagellar motility by regulating the assembly and the activity of axonemal inner dynein arm. The polypeptide is Cilia- and flagella-associated protein 100 (Homo sapiens (Human)).